The primary structure comprises 429 residues: Fez family zinc finger protein 1 (429 aa).

The Engrailed homology 1 repressor motif lies at 29 to 44 (PLAFSIERIMARTPEP). 6 consecutive C2H2-type zinc fingers follow at residues 247–269 (FTCE…MPVH), 275–297 (FVCK…KIIH), 303–325 (HKCN…TRIH), 331–353 (FICE…KLTH), 359–381 (FKCN…MHTH), and 387–410 (FTCP…RKLH). The segment at 409 to 429 (LHDISPGPHSPPTPTGNTEGQ) is disordered.

This sequence belongs to the krueppel C2H2-type zinc-finger protein family.

The protein localises to the nucleus. In terms of biological role, transcription repressor. Involved in the development of the forebrain region. This Danio rerio (Zebrafish) protein is Fez family zinc finger protein 1 (fezf1).